We begin with the raw amino-acid sequence, 472 residues long: MATKCTKCGPGYSTPLEAMKGPREEIVYLPCIYRNTGTEAPDYLATVDVDPKSPQYSQVIHRLPMPYLKDELHHSGWNTCSSCFGDSTKSRNKLILPGLISSRIYVVDVGSEPRAPKLHKVIEASEIQAKCNVSSLHTSHCLASGEVMVSTLGDLQGNGKGSFVLLDGETFEVKGTWEKPGDAAPMGYDFWYQPRHNVMVSTEWAAPNVFKDGFNPAHVEAGLYGSRIFVWDWQRHEIIQTLQMTDGLIPLEIRFLHDPSATQGFVGCALSSNIQRFYKNAEGTWSVEKVIQVPSKKVKGWMLPEMPGLITDILLSLDDRFLYFSNWLHGDIRQYDISNPQKPRLAGQIFLGGSIVRGGSVQVLEDQELTCQPEPLVVKGKRIPGGPQMIQLSLDGKRLYATTSLYSAWDKQFYPDLIREGSMMLQIDVDTVNGGLKLNPNFLVDFGKEPLGPALAHELRYPGGDCSSDIWI.

An N-acetylalanine modification is found at A2. Residues S111 and S467 each carry the phosphoserine modification.

The protein belongs to the selenium-binding protein family. In terms of assembly, interacts with USP33. Post-translationally, the N-terminus is blocked. In terms of tissue distribution, highly expressed in liver, kidney and, to a lesser extent, lung.

It localises to the nucleus. Its subcellular location is the cytoplasm. The protein resides in the cytosol. It is found in the membrane. The catalysed reaction is methanethiol + O2 + H2O = hydrogen sulfide + formaldehyde + H2O2 + H(+). The protein operates within organosulfur degradation. Catalyzes the oxidation of methanethiol, an organosulfur compound known to be produced in substantial amounts by gut bacteria. Selenium-binding protein which may be involved in the sensing of reactive xenobiotics in the cytoplasm. May be involved in intra-Golgi protein transport. This chain is Methanethiol oxidase (Selenbp1), found in Mus musculus (Mouse).